A 431-amino-acid polypeptide reads, in one-letter code: Enolase (431 aa).

Q175 contacts (2R)-2-phosphoglycerate. E217 functions as the Proton donor in the catalytic mechanism. Residues D254, E295, and D322 each contribute to the Mg(2+) site. (2R)-2-phosphoglycerate is bound by residues K347, R376, S377, and K398. K347 (proton acceptor) is an active-site residue.

The protein belongs to the enolase family. Mg(2+) serves as cofactor.

The protein resides in the cytoplasm. It is found in the secreted. The protein localises to the cell surface. It catalyses the reaction (2R)-2-phosphoglycerate = phosphoenolpyruvate + H2O. Its pathway is carbohydrate degradation; glycolysis; pyruvate from D-glyceraldehyde 3-phosphate: step 4/5. Functionally, catalyzes the reversible conversion of 2-phosphoglycerate (2-PG) into phosphoenolpyruvate (PEP). It is essential for the degradation of carbohydrates via glycolysis. This Anaplasma marginale (strain St. Maries) protein is Enolase.